The following is a 389-amino-acid chain: NAD-dependent protein deacetylase sirtuin-2 (389 aa).

A disordered region spans residues 1–34 (MAEPDPSHPLETQAGKVQEAQDSDSDSEGGAAGG). At Ala-2 the chain carries N-acetylalanine. Residues Ser-23, Ser-25, and Ser-27 each carry the phosphoserine modification. Positions 41–51 (LRNLFSQTLSL) match the Nuclear export signal motif. Position 53 is a phosphoserine (Ser-53). Positions 57–338 (RLLDELTLEG…LALAELLGWK (282 aa)) constitute a Deacetylase sirtuin-type domain. Residues 85-89 (AGIST) and 95-97 (DFR) contribute to the NAD(+) site. Ser-100 carries the phosphoserine modification. Residue 167–170 (QNID) coordinates NAD(+). The active-site Proton acceptor is the His-187. Residues Cys-195 and Cys-200 each coordinate Zn(2+). Position 207 is a phosphoserine (Ser-207). Zn(2+)-binding residues include Cys-221 and Cys-224. Residues 262–263 (TS), 286–288 (NKE), and Cys-324 contribute to the NAD(+) site. Positions 351-389 (SIDAQSGAGVPNPSTSASPKKSPPPAKDEARTTEREKPQ) are disordered. The span at 361 to 370 (PNPSTSASPK) shows a compositional bias: low complexity. Ser-368 is modified (phosphoserine; by CDK2 and CDK5). Ser-372 carries the phosphoserine modification. The span at 376–389 (AKDEARTTEREKPQ) shows a compositional bias: basic and acidic residues.

This sequence belongs to the sirtuin family. Class I subfamily. As to quaternary structure, interacts with CDC20, FOXO3 and FZR1. Associates with microtubules in primary cortical mature neurons. Homotrimer. Isoform 1 and isoform 2 interact (via both phosphorylated, unphosphorylated, active or inactive forms) with HDAC6; the interaction is necessary for the complex to interact with alpha-tubulin, suggesting that these proteins belong to a large complex that deacetylates the cytoskeleton. Interacts with FOXO1; the interaction is disrupted upon serum-starvation or oxidative stress, leading to increased level of acetylated FOXO1 and induction of autophagy. Interacts with RELA; the interaction occurs in the cytoplasm and is increased in a TNF-alpha-dependent manner. Interacts with HOXA10; the interaction is direct. Interacts with YWHAB and YWHAG; the interactions occur in a AKT-dependent manner and increase SIRT2-dependent TP53 deacetylation. Interacts with MAPK1/ERK2 and MAPK3/ERK1; the interactions increase SIRT2 stability and deacetylation activity. Interacts (phosphorylated form) with KMT5A isoform 2; the interaction is direct, stimulates KMT5A-mediated methyltransferase activity on histone at 'Lys-20' (H4K20me1) and is increased in a H(2)O(2)-induced oxidative stress-dependent manner. Interacts with G6PD; the interaction is enhanced by H(2)O(2) treatment. Interacts with a G1/S-specific cyclin E-CDK2 complex. Interacts with AURKA, CDK5R1 (p35 form) and CDK5 and HIF1A. Isoform 1, isoform 2 and isoform 5 interact (via C-terminus region) with EP300. Interacts with the tRNA ligase SARS1; recruited to the VEGFA promoter via interaction with SARS1. Interacts with BEX4; negatively regulates alpha-tubulin deacetylation by SIRT2. Zn(2+) is required as a cofactor. Post-translationally, phosphorylated at phosphoserine and phosphothreonine. Phosphorylated at Ser-368 by a mitotic kinase CDK1/cyclin B at the G2/M transition; phosphorylation regulates the delay in cell-cycle progression. Phosphorylated at Ser-368 by a mitotic kinase G1/S-specific cyclin E/Cdk2 complex; phosphorylation inactivates SIRT2-mediated alpha-tubulin deacetylation and thereby negatively regulates cell adhesion, cell migration and neurite outgrowth during neuronal differentiation. Phosphorylated by cyclin A/Cdk2 and p35-Cdk5 complexes and to a lesser extent by the cyclin D3/Cdk4 and cyclin B/Cdk1, in vitro. Dephosphorylated at Ser-368 by CDC14A and CDC14B around early anaphase. Acetylated by EP300; acetylation leads both to the decreased of SIRT2-mediated alpha-tubulin deacetylase activity and SIRT2-mediated down-regulation of TP53 transcriptional activity. In terms of processing, ubiquitinated. In terms of tissue distribution, isoform 1 is expressed in heart, liver and skeletal muscle, weakly expressed in the cortex. Isoform 2 is strongly expressed in the cortex, weakly expressed in heart and liver. Weakly expressed in several malignancies including breast, liver, brain, kidney and prostate cancers compared to normal tissues. Weakly expressed in glioma cell lines compared to normal brain tissues (at protein level). Widely expressed. Highly expressed in heart, brain and skeletal muscle, while it is weakly expressed in placenta and lung. Down-regulated in many gliomas suggesting that it may act as a tumor suppressor gene in human gliomas possibly through the regulation of microtubule network.

The protein resides in the nucleus. Its subcellular location is the cytoplasm. It localises to the perinuclear region. It is found in the cytoskeleton. The protein localises to the microtubule organizing center. The protein resides in the centrosome. Its subcellular location is the centriole. It localises to the spindle. It is found in the midbody. The protein localises to the chromosome. The protein resides in the perikaryon. Its subcellular location is the cell projection. It localises to the growth cone. It is found in the myelin membrane. It catalyses the reaction N(6)-acetyl-L-lysyl-[protein] + NAD(+) + H2O = 2''-O-acetyl-ADP-D-ribose + nicotinamide + L-lysyl-[protein]. The enzyme catalyses N(6)-tetradecanoyl-L-lysyl-[protein] + NAD(+) + H2O = 2''-O-tetradecanoyl-ADP-D-ribose + nicotinamide + L-lysyl-[protein]. The catalysed reaction is N(6)-hexadecanoyl-L-lysyl-[protein] + NAD(+) + H2O = 2''-O-hexadecanoyl-ADP-D-ribose + nicotinamide + L-lysyl-[protein]. Its activity is regulated as follows. Inhibited by Sirtinol, A3 and M15 small molecules. Inhibited by nicotinamide. Inhibited by a macrocyclic peptide inhibitor S2iL5. Inhibited by EP300-induced acetylation. In terms of biological role, NAD-dependent protein deacetylase, which deacetylates internal lysines on histone and alpha-tubulin as well as many other proteins such as key transcription factors. Participates in the modulation of multiple and diverse biological processes such as cell cycle control, genomic integrity, microtubule dynamics, cell differentiation, metabolic networks, and autophagy. Plays a major role in the control of cell cycle progression and genomic stability. Functions in the antephase checkpoint preventing precocious mitotic entry in response to microtubule stress agents, and hence allowing proper inheritance of chromosomes. Positively regulates the anaphase promoting complex/cyclosome (APC/C) ubiquitin ligase complex activity by deacetylating CDC20 and FZR1, then allowing progression through mitosis. Associates both with chromatin at transcriptional start sites (TSSs) and enhancers of active genes. Plays a role in cell cycle and chromatin compaction through epigenetic modulation of the regulation of histone H4 'Lys-20' methylation (H4K20me1) during early mitosis. Specifically deacetylates histone H4 at 'Lys-16' (H4K16ac) between the G2/M transition and metaphase enabling H4K20me1 deposition by KMT5A leading to ulterior levels of H4K20me2 and H4K20me3 deposition throughout cell cycle, and mitotic S-phase progression. Deacetylates KMT5A modulating KMT5A chromatin localization during the mitotic stress response. Also deacetylates histone H3 at 'Lys-57' (H3K56ac) during the mitotic G2/M transition. Upon bacterium Listeria monocytogenes infection, deacetylates 'Lys-18' of histone H3 in a receptor tyrosine kinase MET- and PI3K/Akt-dependent manner, thereby inhibiting transcriptional activity and promoting late stages of listeria infection. During oocyte meiosis progression, may deacetylate histone H4 at 'Lys-16' (H4K16ac) and alpha-tubulin, regulating spindle assembly and chromosome alignment by influencing microtubule dynamics and kinetochore function. Deacetylates histone H4 at 'Lys-16' (H4K16ac) at the VEGFA promoter and thereby contributes to regulate expression of VEGFA, a key regulator of angiogenesis. Deacetylates alpha-tubulin at 'Lys-40' and hence controls neuronal motility, oligodendroglial cell arbor projection processes and proliferation of non-neuronal cells. Phosphorylation at Ser-368 by a G1/S-specific cyclin E-CDK2 complex inactivates SIRT2-mediated alpha-tubulin deacetylation, negatively regulating cell adhesion, cell migration and neurite outgrowth during neuronal differentiation. Deacetylates PARD3 and participates in the regulation of Schwann cell peripheral myelination formation during early postnatal development and during postinjury remyelination. Involved in several cellular metabolic pathways. Plays a role in the regulation of blood glucose homeostasis by deacetylating and stabilizing phosphoenolpyruvate carboxykinase PCK1 activity in response to low nutrient availability. Acts as a key regulator in the pentose phosphate pathway (PPP) by deacetylating and activating the glucose-6-phosphate G6PD enzyme, and therefore, stimulates the production of cytosolic NADPH to counteract oxidative damage. Maintains energy homeostasis in response to nutrient deprivation as well as energy expenditure by inhibiting adipogenesis and promoting lipolysis. Attenuates adipocyte differentiation by deacetylating and promoting FOXO1 interaction to PPARG and subsequent repression of PPARG-dependent transcriptional activity. Plays a role in the regulation of lysosome-mediated degradation of protein aggregates by autophagy in neuronal cells. Deacetylates FOXO1 in response to oxidative stress or serum deprivation, thereby negatively regulating FOXO1-mediated autophagy. Deacetylates a broad range of transcription factors and co-regulators regulating target gene expression. Deacetylates transcriptional factor FOXO3 stimulating the ubiquitin ligase SCF(SKP2)-mediated FOXO3 ubiquitination and degradation. Deacetylates HIF1A and therefore promotes HIF1A degradation and inhibition of HIF1A transcriptional activity in tumor cells in response to hypoxia. Deacetylates RELA in the cytoplasm inhibiting NF-kappaB-dependent transcription activation upon TNF-alpha stimulation. Inhibits transcriptional activation by deacetylating p53/TP53 and EP300. Also deacetylates EIF5A. Functions as a negative regulator on oxidative stress-tolerance in response to anoxia-reoxygenation conditions. Plays a role as tumor suppressor. In addition to protein deacetylase activity, also has activity toward long-chain fatty acyl groups and mediates protein-lysine demyristoylation and depalmitoylation of target proteins, such as ARF6 and KRAS, thereby regulating their association with membranes. Deacetylates EP300, alpha-tubulin and histone H3 and H4. Functionally, lacks deacetylation activity, at least toward known SIRT2 targets. This is NAD-dependent protein deacetylase sirtuin-2 (SIRT2) from Homo sapiens (Human).